A 299-amino-acid polypeptide reads, in one-letter code: MNEINESYDTDSVREFTVSDADAGPYALAEGPDGALWFTLVHRGAVARRDPDDGRVTVHPVGDGPTVIAPGPDGALWFTEYRAHRIGRITPEGHYASFAPLTPEGGPFGITAGPDGAMWFTLSSADRVGRVTMDGEVTEHPAPGAFPSALTAGPDGALWCTLNQGNAIGRLTPDGHGTAYPLPTPGAAPVGIAAGPDGALWFTEIGAGRIGRITVTGDLTEYPLSDPAARPHAVTAGPNGALWFTEWGSGRVGRITVDGRVTSYPLSRTDCEPHGIAVHDGALWCALETGSLARIQVPA.

Substrate is bound at residue histidine 232. Glutamate 272 is a binding site for Mg(2+). The active-site Proton acceptor is histidine 274. Residue glutamate 288 coordinates Mg(2+).

This sequence belongs to the Vgb family. As to quaternary structure, monomer. Mg(2+) is required as a cofactor.

Functionally, inactivates the type B streptogramin antibiotics by linearizing the lactone ring at the ester linkage, generating a free phenylglycine carboxylate and converting the threonyl moiety into 2-amino-butenoic acid. The protein is Virginiamycin B lyase (vgb) of Streptomyces coelicolor (strain ATCC BAA-471 / A3(2) / M145).